Consider the following 946-residue polypeptide: Protein translocase subunit SecA (946 aa).

Residues Q87, 105 to 109 (GEGKT), and D524 contribute to the ATP site. The tract at residues 905–926 (APASDAAQRDPKNPASWGKIGR) is disordered. Zn(2+)-binding residues include C930, C932, C941, and H942.

Belongs to the SecA family. Monomer and homodimer. Part of the essential Sec protein translocation apparatus which comprises SecA, SecYEG and auxiliary proteins SecDF-YajC and YidC. Zn(2+) serves as cofactor.

It is found in the cell inner membrane. The protein resides in the cytoplasm. The catalysed reaction is ATP + H2O + cellular proteinSide 1 = ADP + phosphate + cellular proteinSide 2.. Functionally, part of the Sec protein translocase complex. Interacts with the SecYEG preprotein conducting channel. Has a central role in coupling the hydrolysis of ATP to the transfer of proteins into and across the cell membrane, serving both as a receptor for the preprotein-SecB complex and as an ATP-driven molecular motor driving the stepwise translocation of polypeptide chains across the membrane. The protein is Protein translocase subunit SecA of Bradyrhizobium diazoefficiens (strain JCM 10833 / BCRC 13528 / IAM 13628 / NBRC 14792 / USDA 110).